The sequence spans 818 residues: IQ and AAA domain-containing protein 1-like (818 aa).

The region spanning 206-235 (QGQAAVTIQKVWKGYLQRKRTQQDRRMEME) is the IQ domain. 2 disordered regions span residues 344–377 (QMQENRKKEQEKSKEKGKDEKEKKKGKEEKAKKG) and 458–482 (EERPLRAPKKTPGKKTGKKKEKDLT). A compositionally biased stretch (basic residues) spans 463 to 476 (RAPKKTPGKKTGKK). 567 to 574 (GPSGMGKK) provides a ligand contact to ATP. Positions 795–818 (SMKHRMDQLEAEEAKLDKEKKKRK) are disordered. Basic and acidic residues predominate over residues 798-818 (HRMDQLEAEEAKLDKEKKKRK).

The protein belongs to the AAA ATPase family.

The protein is IQ and AAA domain-containing protein 1-like (IQCA1L) of Homo sapiens (Human).